The chain runs to 534 residues: MHHQTKLDVFIIRAYNLLSNESVISGASLQSVTNSPQTTTNTPSGMVNGAVGTGIANPTGLMGSDSTPNIDEIITSTGSNALTKTNSDSANGTPNGNSSSTSAISNASNPATTGNNASSSATSNGIYTQAQYSQLFAKISKLYNATLSSGSIDDRSTSPKSAIELYQRFQQMIKELELSFDASPYAKYFRRLDGRLWQIKTDSELENDELWRLVSMSIFTVFDPQTGQILTQGRRKGNSLNTSTKGSPSDLQGINNGNNNGNNGNIGNGSNIKNYGNKNMPNNRTKKRGTRVAKNAKNGKNNKNSNKERNGITDTSAFSNTTISNPGTNMLFDPSLSQQLQKRLQTLSQDVNSRSLTGYYTQPTSPGSGGFEFGLSHADLNPNASSNTMGYNTMSNNGSHSWKRRSLGSLDVNTLDDEAVEELLQLTNTSKRQRPMTTAAEGALINDGPDTNLNANNTQMKVDLNPSNSMGPIDTEAVIRPLKEAYDAIISEKGQRIVQLERELELQRQETQWLRKMLIEDMGCVRSMLRDLQR.

The segment at 29-122 (LQSVTNSPQT…TGNNASSSAT (94 aa)) is disordered. Positions 30–43 (QSVTNSPQTTTNTP) are enriched in low complexity. The segment covering 64-88 (SDSTPNIDEIITSTGSNALTKTNSD) has biased composition (polar residues). Residues 89–122 (SANGTPNGNSSSTSAISNASNPATTGNNASSSAT) show a composition bias toward low complexity. Ser151 is modified (phosphoserine). The disordered stretch occupies residues 230–333 (LTQGRRKGNS…SNPGTNMLFD (104 aa)). Polar residues predominate over residues 238-252 (NSLNTSTKGSPSDLQ). Residues 253–279 (GINNGNNNGNNGNIGNGSNIKNYGNKN) show a composition bias toward low complexity. The Nuclear localization signal motif lies at 281–288 (PNNRTKKR). Low complexity predominate over residues 295–304 (NAKNGKNNKN). The segment covering 312-328 (ITDTSAFSNTTISNPGT) has biased composition (polar residues). Phosphoserine occurs at positions 406 and 409. Residues 497 to 534 (IVQLERELELQRQETQWLRKMLIEDMGCVRSMLRDLQR) are leucine-zipper.

Homodimer via the leucine-zipper domain. Forms a complex with a GCR1 homodimer.

Its subcellular location is the nucleus. Transcriptional activator required for the expression of glycolytic genes. Enhances the CT box-dependent transcriptional activation of a RAP1-GCR1 complex. Required for GCR1 phosphorylation. This chain is Glycolytic genes transcriptional activator GCR2 (GCR2), found in Saccharomyces cerevisiae (strain ATCC 204508 / S288c) (Baker's yeast).